The sequence spans 1779 residues: 5-methyl-1-naphthoate synthase (1779 aa).

The 424-residue stretch at 10-433 folds into the Ketosynthase family 3 (KS3) domain; that stretch reads VEPLAVIGMS…GSIAHAVLQQ (424 aa). Residues C181, H316, and H356 each act as for beta-ketoacyl synthase activity in the active site. Residues 902–1027 form an N-terminal hotdog fold region; that stretch reads HTLIGARTTV…ATVVHEPEVG (126 aa). Positions 902–1180 constitute a PKS/mFAS DH domain; sequence HTLIGARTTV…YVKVQDIGSG (279 aa). Residues 1042 to 1180 form a C-terminal hotdog fold region; that stretch reads PVSWTWAKVD…YVKVQDIGSG (139 aa). The region spanning 1664–1742 is the Carrier domain; that stretch reads GELPELVLKV…ALAEFLAAEV (79 aa). S1702 is modified (O-(pantetheine 4'-phosphoryl)serine). Residues 1746-1771 are disordered; sequence TADAEETDPVAGLPAPQQGSGTAEQL.

The catalysed reaction is 5 malonyl-CoA + acetyl-CoA + 3 NADPH + 7 H(+) = 5-methyl-1-naphthoate + 5 CO2 + 3 NADP(+) + 6 CoA + 4 H2O. Its pathway is antibiotic biosynthesis. Polyketide synthase that catalyzes the biosynthesis of the bicyclic aromatic compound 5-methyl-1-naphthoate in the biosynthesis of the antitumor antibiotic azinomycin B. The chain is 5-methyl-1-naphthoate synthase from Streptomyces sahachiroi.